Consider the following 672-residue polypeptide: MCGISAFLCHPGKASSNEQANAQTRHVVDELEHSLDLVGHRGPDARGHIDILTIGLGHVRLSIIDLSLSGNQPFHDQDNSIHAVVNGELYDHEYYRDQLASEFQFVGTSDCEIVIALYKHYGLSFISHLRGEFAFVLWDANRQLLIAARDRYGIKSLYYTVVQGKLLVATEIKSFLAFGLQPEWCVRTLRDQSWRIESRTFFKGVHRVLPGHYLISRPNEREEQKPYWDLEYPDKLSHDARSEEEIVQGVRKRLLEAVKIRLKADVPVAIYLSGGIDSSSVAGMVADLMRQGTKLGNESNSVPSNMKCFTVQFDEDSGADESAIARRTANWLGVDIHLVKMDEEALASRFEDAVWHSEIPLPDLNGMGRLALAEAVHAQGIKVVITGEGSDEHFAGYDAFRADLLSEPDHSWPALQLPETDRQKALAMAAKQVKYGIFGEYSETVPDATKRMLNHSHVTSTIARVGSLPFSNWTTSYGNDLPETSLIEGFDGRVRDNITKRWHPLHTAQYLFTKSFMPHFILRYNGDNIDMVNQVESRCPFLDHHLTEYVNNVPPSLKLKYLPEEKSFREKYILREAVKPYVTDEIYNISKKAYMGPRKFWPGGPLHRKIKQLVTKENVESLGFVDWNATQEAVEKAFTKQDPMGLRRTITVAQFIVLGKRFGVKPAGALPN.

Residue cysteine 2 is the Nucleophile of the active site. Residues 2–219 form the Glutamine amidotransferase type-2 domain; the sequence is CGISAFLCHP…PGHYLISRPN (218 aa). One can recognise an Asparagine synthetase domain in the interval 250–639; the sequence is VRKRLLEAVK…TQEAVEKAFT (390 aa).

This sequence belongs to the asparagine synthetase family.

Its pathway is pigment biosynthesis. Its function is as follows. Amidase; part of the gene cluster that mediates the biosynthesis of the yellow pigment chrysogine. the NRPS chyA mediates the condensation of anthranilic acid and alanine into the intermediate 2-(2-aminopropanamido)benzoic acid. The remainder of the pathway is highly branched yielding at least 13 chrysogine-related compounds. The malonyl transferase chyE converts 2-(2-aminopropanamido)benzoic acid and 2-(2-aminopropanamido)benzamidine into 2-(2-(2-carboxyacetamido)propanamido)benzoic acid and 3-((1-((2-carbamoylphenyl)amino)-1-oxopropan-2-yl)amino)-3-oxopropanoic acid, respectively. ChyD is an amidase, being responsible for the amidation of the carboxylic acid moiety of 2-(2-aminopropanamido)benzoic acid, 2-(2-(2-carboxyacetamido)propanamido)benzoic acid and 2-(2-((4-amino-1-carboxy-4-oxobutyl)amino)propanamido)benzoic acid. ChyC is involved in the same reactions as ChyD, but plays a more minor role in the amidation reactions compared to chyD. The oxidoreductases chyH and chyM are involved in oxidation reactions that form N-pyruvoylanthranilamide from 2-(2-aminopropanamido)benzamidine and (1-((2-carbamoylphenyl)amino)-1-oxopropan-2-yl)glutamine, respectively. N-pyruvoylanthranilamide is further converted via two further branches in the pathway, yielding chrysogine and additional chrysogine-related coumpounds. Chrysogine is likely formed by a spontaneous ring closure from N-pyruvoylanthranilamide. In Penicillium rubens (strain ATCC 28089 / DSM 1075 / NRRL 1951 / Wisconsin 54-1255) (Penicillium chrysogenum), this protein is Amidase chyE.